The following is a 198-amino-acid chain: GTP cyclohydrolase-2 (198 aa).

Residue Arg49 to Glu53 coordinates GTP. Cys54, Cys65, and Cys67 together coordinate Zn(2+). Residues Gln70, Glu92–Arg94, and Thr114 contribute to the GTP site. The active-site Proton acceptor is the Asp126. The active-site Nucleophile is the Arg128. Positions 149 and 154 each coordinate GTP.

It belongs to the GTP cyclohydrolase II family. In terms of assembly, homodimer. It depends on Zn(2+) as a cofactor.

The enzyme catalyses GTP + 4 H2O = 2,5-diamino-6-hydroxy-4-(5-phosphoribosylamino)-pyrimidine + formate + 2 phosphate + 3 H(+). It functions in the pathway cofactor biosynthesis; riboflavin biosynthesis; 5-amino-6-(D-ribitylamino)uracil from GTP: step 1/4. Functionally, catalyzes the conversion of GTP to 2,5-diamino-6-ribosylamino-4(3H)-pyrimidinone 5'-phosphate (DARP), formate and pyrophosphate. The protein is GTP cyclohydrolase-2 of Escherichia fergusonii (strain ATCC 35469 / DSM 13698 / CCUG 18766 / IAM 14443 / JCM 21226 / LMG 7866 / NBRC 102419 / NCTC 12128 / CDC 0568-73).